We begin with the raw amino-acid sequence, 450 residues long: 3-phosphoshikimate 1-carboxyvinyltransferase (450 aa).

A disordered region spans residues methionine 1–glycine 26. The 3-phosphoshikimate site is built by lysine 28, serine 29, and arginine 33. Position 28 (lysine 28) interacts with phosphoenolpyruvate. 2 residues coordinate phosphoenolpyruvate: glycine 101 and arginine 129. 4 residues coordinate 3-phosphoshikimate: serine 174, glutamine 176, aspartate 327, and lysine 354. Glutamine 176 is a phosphoenolpyruvate binding site. The active-site Proton acceptor is aspartate 327. Residues arginine 358 and arginine 403 each contribute to the phosphoenolpyruvate site.

It belongs to the EPSP synthase family. In terms of assembly, monomer.

It is found in the cytoplasm. It catalyses the reaction 3-phosphoshikimate + phosphoenolpyruvate = 5-O-(1-carboxyvinyl)-3-phosphoshikimate + phosphate. Its pathway is metabolic intermediate biosynthesis; chorismate biosynthesis; chorismate from D-erythrose 4-phosphate and phosphoenolpyruvate: step 6/7. In terms of biological role, catalyzes the transfer of the enolpyruvyl moiety of phosphoenolpyruvate (PEP) to the 5-hydroxyl of shikimate-3-phosphate (S3P) to produce enolpyruvyl shikimate-3-phosphate and inorganic phosphate. The polypeptide is 3-phosphoshikimate 1-carboxyvinyltransferase (Ruegeria sp. (strain TM1040) (Silicibacter sp.)).